A 233-amino-acid chain; its full sequence is Purine nucleoside phosphorylase DeoD-type (233 aa).

His-4 lines the a purine D-ribonucleoside pocket. Residues Gly-20, Arg-24, Arg-43, and Arg-87–Thr-90 contribute to the phosphate site. A purine D-ribonucleoside contacts are provided by residues Glu-179–Glu-181 and Ser-203–Asp-204. Asp-204 (proton donor) is an active-site residue.

It belongs to the PNP/UDP phosphorylase family. Homohexamer; trimer of homodimers.

The catalysed reaction is a purine D-ribonucleoside + phosphate = a purine nucleobase + alpha-D-ribose 1-phosphate. It carries out the reaction a purine 2'-deoxy-D-ribonucleoside + phosphate = a purine nucleobase + 2-deoxy-alpha-D-ribose 1-phosphate. Catalyzes the reversible phosphorolytic breakdown of the N-glycosidic bond in the beta-(deoxy)ribonucleoside molecules, with the formation of the corresponding free purine bases and pentose-1-phosphate. In Clostridium novyi (strain NT), this protein is Purine nucleoside phosphorylase DeoD-type.